A 443-amino-acid chain; its full sequence is Trigger factor (443 aa).

The PPIase FKBP-type domain occupies 169–254; it reads GDIAFLDFSG…LNSIKEVQLP (86 aa).

The protein belongs to the FKBP-type PPIase family. Tig subfamily.

Its subcellular location is the cytoplasm. It catalyses the reaction [protein]-peptidylproline (omega=180) = [protein]-peptidylproline (omega=0). Functionally, involved in protein export. Acts as a chaperone by maintaining the newly synthesized protein in an open conformation. Functions as a peptidyl-prolyl cis-trans isomerase. The sequence is that of Trigger factor from Mycoplasmoides gallisepticum (strain R(low / passage 15 / clone 2)) (Mycoplasma gallisepticum).